A 284-amino-acid chain; its full sequence is Probable O-methyltransferase ustE (284 aa).

Residues N22 and N29 are each glycosylated (N-linked (GlcNAc...) asparagine). 2 consecutive transmembrane segments (helical) span residues 88 to 108 (LLLLFMDILAAAKHFWFVLTV) and 157 to 177 (YLATGFIIFAVGLVTECVCEI). N-linked (GlcNAc...) asparagine glycosylation occurs at N205. A helical membrane pass occupies residues 215–235 (GLALASGGMIYGMSIAMFFMW). The N-linked (GlcNAc...) asparagine glycan is linked to N264.

This sequence belongs to the class VI-like SAM-binding methyltransferase superfamily. Isoprenylcysteine carboxyl methyltransferase family.

The protein resides in the membrane. It functions in the pathway secondary metabolite biosynthesis. In terms of biological role, probable O-methyltransferase; part of the gene cluster that mediates the biosynthesis of ustilaginoidins, dimeric gamma-naphthopyrones isolated from different fungal species. The first step in the biosynthesis of ustilaginoidins is the production of gamma-naphthopyrone precursor YWA1 by the non-reducing polyketide synthase ustP, via condensation of one acetyl-CoA starter unit with 6 malonyl-CoA units. YWA1 is then probably substrate of the ustZ to yield norrubrofusarin via a dehydration reaction. A key enzyme in the biosynthetic pathway is the laccase ustL, which catalyzes the oxidative dimerization of norrubrofusarin to ustilaginoidin A. It can produce the M- and P-atropisomers in varying amounts, depending on the reaction conditions. For the biosynthesis of 3-methylustilaginoid in derivatives such as chaetochromin A, a methylated derivative of YWA1 is required. The C-methylation is considered to be catalyzed by ustM, the phosphopantetheine attachment site of which indicates that it acts on the growing polyketide chain before release of the product. For the biosynthesis of chaetochromin A, it is assumed that saturation of the D2 double bond takes place before dimerization, and is probably catalyzed by an external reductase because no candidate gene was identified within the cluster. This Ustilaginoidea virens (Rice false smut fungus) protein is Probable O-methyltransferase ustE.